The following is a 144-amino-acid chain: IgW chain C region, secreted form 1/3 (144 aa).

The Ig-like domain occupies 1–82 (VYNQTTAVLG…AGSRFNDRIS (82 aa)). Residues Asn-3, Asn-43, and Asn-123 are each glycosylated (N-linked (GlcNAc...) asparagine). Cys-11 and Cys-68 form a disulfide bridge. A secretory tail region spans residues 87 to 144 (KGGTINLPVPGGNTPCTCPPCSCSGCMPKLVYQTDLNVTLENGGQLQYNCHQQACKIK).

In terms of tissue distribution, expressed mainly in lymphoid tissues including spleen, epigonal organ and circulating lymphocytes.

It is found in the secreted. This is IgW chain C region, secreted form 1/3 from Heterodontus francisci (Horn shark).